The sequence spans 913 residues: Chitin synthase 1 (913 aa).

The segment at 1 to 135 is disordered; it reads MAYRGGGPND…QQPGAQTGGL (135 aa). A glycan (N-linked (GlcNAc...) asparagine) is linked at asparagine 25. A compositionally biased stretch (basic and acidic residues) spans 41–56; it reads RDPHARGTSPYEHHLG. Residue asparagine 539 is glycosylated (N-linked (GlcNAc...) asparagine). 7 consecutive transmembrane segments (helical) span residues 566–586, 625–645, 658–678, 712–732, 740–760, 840–860, and 881–901; these read FFFHIQLIYNVLNVIFTWFSL, IINSILQYLYLAFLVIQFVLA, IASFIVFGFIQTYILVLSGYL, VILVALVTIYGLNFIASFMYL, SFPYYLVLMSTYINILMVYAF, TGLVVSWLFSNAALIVFITTD, and FLLYSTAVLALVRFTGFLWFL.

It belongs to the chitin synthase family. Class III subfamily.

The protein localises to the cell membrane. The catalysed reaction is [(1-&gt;4)-N-acetyl-beta-D-glucosaminyl](n) + UDP-N-acetyl-alpha-D-glucosamine = [(1-&gt;4)-N-acetyl-beta-D-glucosaminyl](n+1) + UDP + H(+). Its function is as follows. Polymerizes chitin, a structural polymer of the cell wall and septum, by transferring the sugar moiety of UDP-GlcNAc to the non-reducing end of the growing chitin polymer. Plays a role in cell wall integrity and is involved in tolerance to hyperosmotic conditions. Required to successfully penetrate the host plants and thus plays a key role in pathogenicity. The chain is Chitin synthase 1 from Verticillium dahliae (strain VdLs.17 / ATCC MYA-4575 / FGSC 10137) (Verticillium wilt).